A 664-amino-acid polypeptide reads, in one-letter code: ATP-dependent zinc metalloprotease FtsH (664 aa).

At 1–9 (MKQNIKRNW) the chain is on the cytoplasmic side. A helical transmembrane segment spans residues 10 to 30 (IWILIVMIVIGIILYFSIRNL). Residues 31 to 136 (FSTKVAEWSI…KSVATPQPNP (106 aa)) lie on the Extracellular side of the membrane. Residues 137–157 (FLGILISSVPVLILIFVMVWI) traverse the membrane as a helical segment. Residues 158 to 664 (YRSQVKMMNG…SLIEKTSKKE (507 aa)) lie on the Cytoplasmic side of the membrane. Position 229-236 (229-236 (GPPGTGKT)) interacts with ATP. H451 contacts Zn(2+). E452 is a catalytic residue. Residues H455 and D529 each contribute to the Zn(2+) site. The segment covering 639–649 (IEEKDLSKNSE) has biased composition (basic and acidic residues). Residues 639 to 664 (IEEKDLSKNSEDNNLDSLIEKTSKKE) form a disordered region.

In the central section; belongs to the AAA ATPase family. It in the C-terminal section; belongs to the peptidase M41 family. Homohexamer. Zn(2+) is required as a cofactor.

It localises to the cell membrane. Functionally, acts as a processive, ATP-dependent zinc metallopeptidase for both cytoplasmic and membrane proteins. Plays a role in the quality control of integral membrane proteins. In Mycoplasmopsis synoviae (strain 53) (Mycoplasma synoviae), this protein is ATP-dependent zinc metalloprotease FtsH.